Reading from the N-terminus, the 129-residue chain is Small ribosomal subunit protein uS8 (129 aa).

Belongs to the universal ribosomal protein uS8 family. Part of the 30S ribosomal subunit.

Its function is as follows. One of the primary rRNA binding proteins, it binds directly to 16S rRNA central domain where it helps coordinate assembly of the platform of the 30S subunit. This chain is Small ribosomal subunit protein uS8, found in Thermofilum pendens (strain DSM 2475 / Hrk 5).